The sequence spans 62 residues: UPF0434 protein RHECIAT_CH0004260 (62 aa).

This sequence belongs to the UPF0434 family.

The protein is UPF0434 protein RHECIAT_CH0004260 of Rhizobium etli (strain CIAT 652).